The primary structure comprises 289 residues: uncharacterized protein (289 aa).

E48 is an active-site residue.

This sequence belongs to the PhzF family.

This is an uncharacterized protein from Pasteurella multocida (strain Pm70).